A 492-amino-acid chain; its full sequence is N-succinylglutamate 5-semialdehyde dehydrogenase (492 aa).

Gly-220 to Gly-225 is an NAD(+) binding site. Catalysis depends on residues Glu-243 and Cys-277.

Belongs to the aldehyde dehydrogenase family. AstD subfamily.

The catalysed reaction is N-succinyl-L-glutamate 5-semialdehyde + NAD(+) + H2O = N-succinyl-L-glutamate + NADH + 2 H(+). The protein operates within amino-acid degradation; L-arginine degradation via AST pathway; L-glutamate and succinate from L-arginine: step 4/5. Functionally, catalyzes the NAD-dependent reduction of succinylglutamate semialdehyde into succinylglutamate. The protein is N-succinylglutamate 5-semialdehyde dehydrogenase of Escherichia coli O17:K52:H18 (strain UMN026 / ExPEC).